Consider the following 720-residue polypeptide: Engulfment and cell motility protein 2 (720 aa).

Tyr-48 carries the phosphotyrosine modification. Residues 310 to 484 (QAQRDIIFEL…QVVREQITRA (175 aa)) enclose the ELMO domain. Ser-503 bears the Phosphoserine mark. Residues 553 to 674 (SSFRKIGNRR…LLGKDMSSEL (122 aa)) form the PH domain. The short motif at 700-707 (PEAPPPVP) is the SH3-binding element. Tyr-717 bears the Phosphotyrosine mark.

Interacts directly with the SH3-domain of DOCK1 via its SH3-binding site. Probably forms a heterotrimeric complex with DOCK1 and RAC1. Interacts with ARHGEF16, DOCK4 and EPHA2; mediates activation of RAC1 by EPHA2. Interacts with ADGRB3. Interacts with AUTS2; the interaction is direct.

Its subcellular location is the cytoplasm. It localises to the cytosol. The protein resides in the membrane. Involved in cytoskeletal rearrangements required for phagocytosis of apoptotic cells and cell motility. Acts in association with DOCK1 and CRK. Was initially proposed to be required in complex with DOCK1 to activate Rac Rho small GTPases. May enhance the guanine nucleotide exchange factor (GEF) activity of DOCK1. The chain is Engulfment and cell motility protein 2 (ELMO2) from Bos taurus (Bovine).